The following is a 601-amino-acid chain: COP9 signalosome complex subunit 1 (601 aa).

Over residues 1–10 (MQNELLDDPM) the composition is skewed to acidic residues. Disordered stretches follow at residues 1–54 (MQNE…LDNP) and 268–294 (DADD…PYMV). Over residues 14–24 (APAAEAAAADE) the composition is skewed to low complexity. The PCI domain maps to 338-500 (TILQIKTECL…GIVRILDERD (163 aa)). A disordered region spans residues 535 to 581 (SISDKETRPKRKNQKESAKFDRNFGGIDVDEDPRGIAGPSGLSDDFN).

It belongs to the CSN1 family. In terms of assembly, component of the CSN complex, probably composed of csn-1, csn-2, csn-3, csn-4, csn-5, csn-6 and csn-7. Within the complex it probably interacts directly with csn-2, csn-4 and csn-5. May interact with itself. Interacts with rbx-1.

The protein localises to the cytoplasm. It localises to the nucleus. In terms of biological role, essential component of the COP9 signalosome complex (CSN), a complex involved in various cellular and developmental processes. The CSN complex is an essential regulator of the ubiquitin (Ubl) conjugation pathway by mediating the deneddylation of the cullin subunits of the SCF-type E3 ligase complexes, leading to decrease the Ubl ligase activity of SCF. The CSN complex plays an essential role in embryogenesis and oogenesis and is required to regulate microtubule stability in the early embryo. Mediates mei-3/katanin targeting for degradation at the meiosis to mitosis transition via deneddylation of cul-3. The chain is COP9 signalosome complex subunit 1 (csn-1) from Caenorhabditis elegans.